The following is a 71-amino-acid chain: Serine palmitoyltransferase small subunit A (71 aa).

Residues 1–12 (MAGMALARAWKQ) lie on the Cytoplasmic side of the membrane. A helical membrane pass occupies residues 13-29 (MSWFYYQYLLVTALYML). Residues 30-34 (EPWER) lie on the Lumenal side of the membrane. Residues 35-57 (TVFNSMLVSIVGMALYTGYVFMP) form a helical membrane-spanning segment. Over 58–71 (QHIMAILHYFEIVQ) the chain is Cytoplasmic.

This sequence belongs to the SPTSS family. SPTSSA subfamily. Component of the serine palmitoyltransferase (SPT) complex, which is composed of SPTLC1, SPTLC2 or SPTLC3 and SPTSSA or SPTSSB. The heterodimer consisting of SPTLC1 and SPTLC2/SPTLC3 forms the catalytic core of the enzyme, while SPTSSA or SPTSSB subunits determine substrate specificity. SPT also interacts with ORMDL proteins, especially ORMDL3, which negatively regulate SPT activity in the presence of ceramides. Interacts with MBOAT7; the interaction plays a role in MBOAT7 localization to mitochondria-associated membranes.

Its subcellular location is the endoplasmic reticulum membrane. It functions in the pathway lipid metabolism; sphingolipid metabolism. Functionally, component of the serine palmitoyltransferase multisubunit enzyme (SPT) that catalyzes the initial and rate-limiting step in sphingolipid biosynthesis by condensing L-serine and activated acyl-CoA (most commonly palmitoyl-CoA) to form long-chain bases. The SPT complex is composed of SPTLC1, SPTLC2 or SPTLC3 and SPTSSA or SPTSSB. Within this complex, the heterodimer consisting of SPTLC1 and SPTLC2/SPTLC3 forms the catalytic core. Within the SPT complex, SPTSSA stimulates the catalytic activity and plays a role in substrate specificity, which depends upon the overall complex composition. The SPTLC1-SPTLC2-SPTSSA complex shows a strong preference for C16-CoA substrate, while the SPTLC1-SPTLC3-SPTSSA isozyme uses both C14-CoA and C16-CoA as substrates, with a slight preference for C14-CoA. Independently of its action as a SPT component, may be involved in MBOAT7 localization to mitochondria-associated membranes, a membrane bridge between the endoplasmic reticulum and mitochondria, may hence affect MBOAT7-catalyzed incorporation of arachidonic acid into phosphatidylinositol. The chain is Serine palmitoyltransferase small subunit A from Homo sapiens (Human).